The primary structure comprises 690 residues: Adhesion G protein-coupled receptor L4 (690 aa).

The first 19 residues, 1-19 (MKRLPLLVVFSTLLNCSYT), serve as a signal peptide directing secretion. One can recognise an EGF-like 1 domain in the interval 20-57 (QNCTKTPCLPNAKCEIRNGIEACYCNMGFSGNGVTICE). Topologically, residues 20-432 (QNCTKTPCLP…DYNILTRITQ (413 aa)) are extracellular. N21 is a glycosylation site (N-linked (GlcNAc...) asparagine). Disulfide bonds link C22–C33, C27–C42, C44–C56, C62–C75, C69–C84, and C86–C107. One can recognise an EGF-like 2; calcium-binding domain in the interval 58-108 (DDNECGNLTQSCGENANCTNTEGSYYCMCVPGFRSSSNQDRFITNDGTVCI). N-linked (GlcNAc...) asparagine glycans are attached at residues N64 and N74. Residues N127, N177, N188, N249, N381, and N395 are each glycosylated (N-linked (GlcNAc...) asparagine). The region spanning 244 to 419 (TEFDTNSTDI…AILMSSGPSI (176 aa)) is the GAIN-B domain. Disulfide bonds link C370-C401 and C389-C403. Residues 370 to 419 (CAFWNYSPDTMNGSWSSEGCELTYSNETHTSCRCNHLTHFAILMSSGPSI) are GPS. The helical transmembrane segment at 433–453 (LGIIISLICLAICIFTFWFFS) threads the bilayer. Topologically, residues 454–460 (EIQSTRT) are cytoplasmic. Residues 461 to 481 (TIHKNLCCSLFLAELVFLVGI) form a helical membrane-spanning segment. Residues 482–499 (NTNTNKLFCSIIAGLLHY) are Extracellular-facing. A helical membrane pass occupies residues 500-520 (FFLAAFAWMCIEGIHLYLIVV). Residues 521–532 (GVIYNKGFLHKN) are Cytoplasmic-facing. A helical transmembrane segment spans residues 533-553 (FYIFGYLSPAVVVGFSAALGY). The Extracellular segment spans residues 554 to 573 (RYYGTTKVCWLSTENNFIWS). A helical membrane pass occupies residues 574–594 (FIGPACLIILVNLLAFGVIIY). Residues 595–618 (KVFRHTAGLKPEVSCFENIRSCAR) are Cytoplasmic-facing. A helical membrane pass occupies residues 619–639 (GALALLFLLGTTWIFGVLHVV). Residues 640-646 (HASVVTA) are Extracellular-facing. A helical membrane pass occupies residues 647–667 (YLFTVSNAFQGMFIFLFLCVL). The Cytoplasmic segment spans residues 668 to 690 (SRKIQEEYYRLFKNVPCCFGCLR).

The protein belongs to the G-protein coupled receptor 2 family. Adhesion G-protein coupled receptor (ADGR) subfamily. In terms of assembly, heterodimer of 2 chains generated by proteolytic processing; the large extracellular N-terminal fragment and the membrane-bound C-terminal fragment predominantly remain associated and non-covalently linked. In terms of processing, glycosylated. Proteolytically cleaved into 2 subunits, an extracellular alpha subunit and a seven-transmembrane subunit. Detected in the majority of epithelial cells in tumor and normal tissues. Expressed also in human umbilical vein endothelial cells.

It is found in the cell membrane. Its function is as follows. Endothelial orphan receptor that acts as a key regulator of angiogenesis. This chain is Adhesion G protein-coupled receptor L4, found in Homo sapiens (Human).